Consider the following 251-residue polypeptide: DNA repair protein RecO (251 aa).

Belongs to the RecO family.

Functionally, involved in DNA repair and RecF pathway recombination. In Nitratidesulfovibrio vulgaris (strain ATCC 29579 / DSM 644 / CCUG 34227 / NCIMB 8303 / VKM B-1760 / Hildenborough) (Desulfovibrio vulgaris), this protein is DNA repair protein RecO.